Here is a 373-residue protein sequence, read N- to C-terminus: Zinc finger protein CONSTANS (373 aa).

A B box-type 1; atypical zinc finger spans residues 15 to 57; the sequence is NRARPCDTCRSNACTVYCHADSAYLCMSCDAQVHSANRVASRH. The Zn(2+) site is built by cysteine 20, cysteine 23, cysteine 43, histidine 48, cysteine 63, cysteine 66, cysteine 86, and histidine 91. The B box-type 2; atypical zinc-finger motif lies at 58–108; sequence KRVRVCESCERAPAAFLCEADDASLCTACDSEVHSANPLARRHQRVPILPI. The span at 109 to 120 shows a compositional bias: polar residues; sequence SGNSFSSMTTTH. Residues 109–130 are disordered; sequence SGNSFSSMTTTHHQSEKTMTDP. Residues 121–130 show a composition bias toward basic and acidic residues; sequence HQSEKTMTDP. In terms of domain architecture, CCT spans 306-348; that stretch reads REARVLRYREKRKTRKFEKTIRYASRKAYAEIRPRVNGRFAKR.

This sequence belongs to the CONSTANS family. Interacts with ADO3, SPA1, SPA2, SPA3 and SPA4. Interacts with MRG1 and MRG2 (via MRG domain). Interacts (via B-box) with MIP1A. Interacts with AS1 to form a functional complex regulating FT expression. Interacts with NFYC9. Component of a red light-dependent nuclear complex made of PHL, PHYB and CO. Interacts directly with PHL in the presence of PHYB. In terms of tissue distribution, expressed in leaves, shoots and shoot apical meristem. Detected in the vascular tissue of the hypocotyl, the cotyledons and the leaves. Restricted to the protoxylem and phloem in young inflorescence stems and to the phloem only in older inflorescences. Also detected in the vascular tissue of the root.

It localises to the nucleus. Functionally, transcription factor that acts in the long day flowering pathway and may mediate between the circadian clock and the control of flowering. Plays a role in the regulation of flowering time by acting on 'SUPPRESSOR OF OVEREXPRESSION OF CO1', 'TERMINAL FLOWER 1' and 'FLOWERING LOCUS T'. Also regulates P5CS2 and ACS10 (involved in proline and ethylene biosynthesis, respectively). Regulates the expression of NAKR1 by binding to the 5'-TGTG(N2-3)ATG-3' motif. This chain is Zinc finger protein CONSTANS, found in Arabidopsis thaliana (Mouse-ear cress).